A 243-amino-acid polypeptide reads, in one-letter code: UPF0246 protein SEQ_2141 (243 aa).

The protein belongs to the UPF0246 family.

The protein is UPF0246 protein SEQ_2141 of Streptococcus equi subsp. equi (strain 4047).